Here is a 174-residue protein sequence, read N- to C-terminus: Co-chaperone protein HscB (174 aa).

A J domain is found at 2–74 (DYFTLFGLPA…LKRAEYMLSL (73 aa)).

Belongs to the HscB family. In terms of assembly, interacts with HscA and stimulates its ATPase activity. Interacts with IscU.

Its function is as follows. Co-chaperone involved in the maturation of iron-sulfur cluster-containing proteins. Seems to help targeting proteins to be folded toward HscA. The polypeptide is Co-chaperone protein HscB (Yersinia pseudotuberculosis serotype O:1b (strain IP 31758)).